The sequence spans 66 residues: Large ribosomal subunit protein bL33 (66 aa).

The protein belongs to the bacterial ribosomal protein bL33 family.

This Wolbachia pipientis wMel protein is Large ribosomal subunit protein bL33.